Reading from the N-terminus, the 149-residue chain is 3-dehydroquinate dehydratase (149 aa).

The active-site Proton acceptor is the tyrosine 23. Substrate is bound by residues asparagine 75, histidine 81, and aspartate 88. Catalysis depends on histidine 101, which acts as the Proton donor. Residues 102 to 103 (LS) and arginine 112 contribute to the substrate site.

The protein belongs to the type-II 3-dehydroquinase family. In terms of assembly, homododecamer.

The enzyme catalyses 3-dehydroquinate = 3-dehydroshikimate + H2O. Its pathway is metabolic intermediate biosynthesis; chorismate biosynthesis; chorismate from D-erythrose 4-phosphate and phosphoenolpyruvate: step 3/7. Its function is as follows. Catalyzes a trans-dehydration via an enolate intermediate. In Stenotrophomonas maltophilia (strain R551-3), this protein is 3-dehydroquinate dehydratase.